The sequence spans 544 residues: Chaperonin GroEL (544 aa).

Residues 30 to 33 (TLGP), Lys-51, 87 to 91 (DGTTT), Gly-415, and Asp-495 each bind ATP.

Belongs to the chaperonin (HSP60) family. Forms a cylinder of 14 subunits composed of two heptameric rings stacked back-to-back. Interacts with the co-chaperonin GroES.

It localises to the cytoplasm. The enzyme catalyses ATP + H2O + a folded polypeptide = ADP + phosphate + an unfolded polypeptide.. Functionally, together with its co-chaperonin GroES, plays an essential role in assisting protein folding. The GroEL-GroES system forms a nano-cage that allows encapsulation of the non-native substrate proteins and provides a physical environment optimized to promote and accelerate protein folding. This Bartonella bacilliformis (strain ATCC 35685 / KC583 / Herrer 020/F12,63) protein is Chaperonin GroEL.